We begin with the raw amino-acid sequence, 330 residues long: MISFSSFYQQIADSTLQHWLEDLPAILGKWQREHKHGNLPKWEKVLNKLNYAEPDSVDFVDSVTIGSGSQLSAGQQQKLENLLRLFQPWRKGPFNVHGIDIDTEWRSDWKWQRVRQHISPLAKRTVLDVGCGSGYHMWRMLGDGAARVVGIDPSPLFLCQFEAIKRLAGNQHPVHLLPLGIEELPPLDAFDTVFSMGVLYHRRSPIDHLYQLRDQLRMGGELVLETLVIDGDENTVLVPEDRYGKMNNVWFLPSVAALMLWLKKCDFTNIRCVDVDTTSLAEQRSTTWMPNESLVDYLDPKDINLTIEGYPAPKRATIIATKNQPNFDLI.

Carboxy-S-adenosyl-L-methionine contacts are provided by residues lysine 91, tryptophan 105, lysine 110, glycine 130, 152–154, 181–182, methionine 196, tyrosine 200, and arginine 315; these read DPS and IE.

It belongs to the class I-like SAM-binding methyltransferase superfamily. CmoB family. As to quaternary structure, homotetramer.

The catalysed reaction is carboxy-S-adenosyl-L-methionine + 5-hydroxyuridine(34) in tRNA = 5-carboxymethoxyuridine(34) in tRNA + S-adenosyl-L-homocysteine + H(+). Catalyzes carboxymethyl transfer from carboxy-S-adenosyl-L-methionine (Cx-SAM) to 5-hydroxyuridine (ho5U) to form 5-carboxymethoxyuridine (cmo5U) at position 34 in tRNAs. The polypeptide is tRNA U34 carboxymethyltransferase (Shewanella denitrificans (strain OS217 / ATCC BAA-1090 / DSM 15013)).